A 510-amino-acid polypeptide reads, in one-letter code: Serine/threonine protein phosphatase 2A 59 kDa regulatory subunit B' eta isoform (510 aa).

The disordered stretch occupies residues 1-87 (MWKQILSKLP…NNNNNNNNGV (87 aa)). Residues 10–19 (PNKKSSKHEH) are compositionally biased toward basic residues. The segment covering 27-42 (HSSSSSHTSGASTSKS) has biased composition (low complexity).

This sequence belongs to the phosphatase 2A regulatory subunit B56 family. As to quaternary structure, PP2A consists of a common heteromeric enzyme, composed of a catalytic subunit (subunits C), a constant regulatory subunit (subunit A), and a variety of regulatory subunits such as subunits B (the R2/B/PR55/B55, R3/B''/PR72/PR130/PR59 and R5/B'/B56 families). Interacts with BZR1. Interacts with BRI1.

The protein localises to the nucleus. It is found in the nucleolus. The protein resides in the cytoplasm. Its function is as follows. The B regulatory subunit may modulate substrate selectivity and catalytic activity, and may also direct the localization of the catalytic enzyme to a particular subcellular compartment. The holoenzyme composed of PP2AA1, PP2A4 and B'ETA acts as negative regulator of plant innate immunity by controlling BAK1 phosphorylation state and activation in surface-localized immune receptor complexes. Required for the formation of the PP2A holoenzyme that negatively regulates brassinosteroid signaling by dephosphorylating and inactivating BRI1 in the cytoplasm. The sequence is that of Serine/threonine protein phosphatase 2A 59 kDa regulatory subunit B' eta isoform (B'ETA) from Arabidopsis thaliana (Mouse-ear cress).